We begin with the raw amino-acid sequence, 66 residues long: Ornithorhynchus venom defensin-like peptide A (66 aa).

The first 22 residues, 1–22, serve as a signal peptide directing secretion; sequence MRLTYLLLLLVAVLFQAGSGSA. The propeptide occupies 23-24; the sequence is EP. Cystine bridges form between C33–C63, C40–C56, and C48–C64.

In terms of tissue distribution, produced by the crural gland and detected in venom from the spur located on each male hind leg. Is the only OvDLP that is expressed in venom gland alone.

It is found in the secreted. Functionally, does not show antimicrobial, myotoxic, hemolytic and cell-promoting activities. The sequence is that of Ornithorhynchus venom defensin-like peptide A from Ornithorhynchus anatinus (Duckbill platypus).